Reading from the N-terminus, the 459-residue chain is Trigger factor (459 aa).

The 80-residue stretch at 166–245 (GDFANIDLTA…VNSVKAEELP (80 aa)) folds into the PPIase FKBP-type domain.

It belongs to the FKBP-type PPIase family. Tig subfamily.

The protein localises to the cytoplasm. It catalyses the reaction [protein]-peptidylproline (omega=180) = [protein]-peptidylproline (omega=0). Involved in protein export. Acts as a chaperone by maintaining the newly synthesized protein in an open conformation. Functions as a peptidyl-prolyl cis-trans isomerase. This is Trigger factor from Bifidobacterium longum (strain NCC 2705).